A 1014-amino-acid polypeptide reads, in one-letter code: DNA translocase FtsK 2 (1014 aa).

A helical membrane pass occupies residues 1–21 (MFWIVLIVILLLALAGLFFVR). 3 disordered regions span residues 89–142 (ESEP…EDIA), 283–318 (RHAG…RRRV), and 487–525 (SQAV…AVSE). A compositionally biased stretch (acidic residues) spans 121–140 (EEAETEEAEAAEEEAADTED). Over residues 298 to 307 (DVSQGQSVSD) the composition is skewed to polar residues. One can recognise a FtsK domain in the interval 662-871 (GQPVVTDLGK…FQVSSKIDSR (210 aa)). Residue 682–687 (GSGKSV) participates in ATP binding.

It belongs to the FtsK/SpoIIIE/SftA family. Homohexamer. Forms a ring that surrounds DNA.

It localises to the cell inner membrane. In terms of biological role, essential cell division protein that coordinates cell division and chromosome segregation. The N-terminus is involved in assembly of the cell-division machinery. The C-terminus functions as a DNA motor that moves dsDNA in an ATP-dependent manner towards the dif recombination site, which is located within the replication terminus region. Translocation stops specifically at Xer-dif sites, where FtsK interacts with the Xer recombinase, allowing activation of chromosome unlinking by recombination. FtsK orienting polar sequences (KOPS) guide the direction of DNA translocation. FtsK can remove proteins from DNA as it translocates, but translocation stops specifically at XerCD-dif site, thereby preventing removal of XerC and XerD from dif. The chain is DNA translocase FtsK 2 (ftsK2) from Neisseria meningitidis serogroup A / serotype 4A (strain DSM 15465 / Z2491).